The following is a 399-amino-acid chain: Lipoyl synthase, mitochondrial (399 aa).

The N-terminal 14 residues, 1-14, are a transit peptide targeting the mitochondrion; the sequence is MALISRSCGAASRY. The segment covering 39-52 has biased composition (low complexity); that stretch reads AASTSSSSSPSPST. A disordered region spans residues 39–60; that stretch reads AASTSSSSSPSPSTHNDRKKDL. Cysteine 128, cysteine 133, cysteine 139, cysteine 159, cysteine 163, cysteine 166, and serine 374 together coordinate [4Fe-4S] cluster. Residues 144-363 enclose the Radical SAM core domain; it reads EYATATATIM…EKVGQEMGFI (220 aa).

Belongs to the radical SAM superfamily. Lipoyl synthase family. The cofactor is [4Fe-4S] cluster.

The protein resides in the mitochondrion. The catalysed reaction is [[Fe-S] cluster scaffold protein carrying a second [4Fe-4S](2+) cluster] + N(6)-octanoyl-L-lysyl-[protein] + 2 oxidized [2Fe-2S]-[ferredoxin] + 2 S-adenosyl-L-methionine + 4 H(+) = [[Fe-S] cluster scaffold protein] + N(6)-[(R)-dihydrolipoyl]-L-lysyl-[protein] + 4 Fe(3+) + 2 hydrogen sulfide + 2 5'-deoxyadenosine + 2 L-methionine + 2 reduced [2Fe-2S]-[ferredoxin]. It participates in protein modification; protein lipoylation via endogenous pathway; protein N(6)-(lipoyl)lysine from octanoyl-[acyl-carrier-protein]: step 2/2. Catalyzes the radical-mediated insertion of two sulfur atoms into the C-6 and C-8 positions of the octanoyl moiety bound to the lipoyl domains of lipoate-dependent enzymes, thereby converting the octanoylated domains into lipoylated derivatives. In Danio rerio (Zebrafish), this protein is Lipoyl synthase, mitochondrial (lias).